Reading from the N-terminus, the 332-residue chain is MKVAVLGAGAWGTALAAHLAARHDTLLWARDAALVAELAARRENVRYLDGVALPPALRYEADLTAALSHAQADDALCVIAAPVAGLRALCRAMRDAGRVPAHFVWVCKGFEADTRLLPHQMVAEELPDHASYGVLSGPSFAREVAQGLPVALTVASASAACRGRTLAAFHHGAMRIYTGDDVVGVEVGGAVKNVLAIATGIADGLGLGLNARAALVTRGLAEMSRLGVALGGRAETFTGLTGLGDLILTATGDLSRNRTVGLQLAAGRSLDDILAALGHVAEGVRCARAVLSIARERGVDMPITEAVCAVLFDGVAPRDAVSGLLRRDAKAE.

Residues Trp-11, Arg-30, and Lys-108 each coordinate NADPH. Sn-glycerol 3-phosphate-binding residues include Lys-108, Gly-137, and Ser-139. Position 141 (Ala-141) interacts with NADPH. The sn-glycerol 3-phosphate site is built by Lys-192, Asp-245, Ser-255, Arg-256, and Asn-257. Residue Lys-192 is the Proton acceptor of the active site. Residue Arg-256 participates in NADPH binding. 2 residues coordinate NADPH: Val-280 and Glu-282.

The protein belongs to the NAD-dependent glycerol-3-phosphate dehydrogenase family.

It localises to the cytoplasm. It catalyses the reaction sn-glycerol 3-phosphate + NAD(+) = dihydroxyacetone phosphate + NADH + H(+). The catalysed reaction is sn-glycerol 3-phosphate + NADP(+) = dihydroxyacetone phosphate + NADPH + H(+). Its pathway is membrane lipid metabolism; glycerophospholipid metabolism. Catalyzes the reduction of the glycolytic intermediate dihydroxyacetone phosphate (DHAP) to sn-glycerol 3-phosphate (G3P), the key precursor for phospholipid synthesis. The chain is Glycerol-3-phosphate dehydrogenase [NAD(P)+] from Burkholderia thailandensis (strain ATCC 700388 / DSM 13276 / CCUG 48851 / CIP 106301 / E264).